The chain runs to 690 residues: Quinohemoprotein alcohol dehydrogenase ADH IIB (690 aa).

A signal peptide spans 1-22 (MKKPLRTSLLMLCLATPLAALA). A pyrroloquinoline quinone-binding site is contributed by Glu81. Residues Cys127 and Cys128 are joined by a disulfide bond. Pyrroloquinoline quinone-binding positions include Arg133, Thr177, and 193-194 (GA). Position 195 (Glu195) interacts with Ca(2+). Thr252 contributes to the pyrroloquinoline quinone binding site. Positions 272 and 317 each coordinate Ca(2+). The active-site Proton acceptor is the Asp317. Residues Lys344, 404 to 405 (NW), and Val547 contribute to the pyrroloquinoline quinone site. In terms of domain architecture, Cytochrome c spans 600–678 (EQVQAGKQLY…QIKLYVMSRE (79 aa)). The heme c site is built by Cys613, Cys616, His617, and Met655.

It belongs to the bacterial PQQ dehydrogenase family. As to quaternary structure, monomer. The cofactor is pyrroloquinoline quinone. Ca(2+) serves as cofactor. It depends on heme c as a cofactor.

It localises to the periplasm. The enzyme catalyses 2 oxidized [azurin] + a primary alcohol = 2 reduced [azurin] + an aldehyde + 2 H(+). Its activity is regulated as follows. Inhibited by 10 mM 1-butanol. In terms of biological role, catalyzes the dye-linked oxidation of primary alcohols to the corresponding aldehydes and the (subsequent) oxidation of the aldehydes to carboxylic acids. Exhibits activity with longer mono-alcohols (C-4 to C-7) but not with methanol or glycerol. Reacts with 1,2-propanediol and 1,3-propanediol but not with sugar alcohols such as D-sorbitol. This is Quinohemoprotein alcohol dehydrogenase ADH IIB from Pseudomonas putida (Arthrobacter siderocapsulatus).